The sequence spans 406 residues: MQTAATSTFFANPHVKHLPGPFLRPSPHYGALVHLPSFRNKTPISIAMAASPSPPPLQELTITRPDDWHLHLREGDVLAAVLPHSAMHFGRAIVMPNLKPPVTTTARALEYREEILRALPPGSNFVPLMTLYLTDNTSPEEIKLAKKSGVVFAVKLYPSGATTNSQDGVTDIFGKCLPVLEEMARQEMPLLVHGEVTDQHVDTFDREKVFIEKILAPLVQRLPQLKIVMEHITTMDAVNFVESCKEGHVAATVTPQHLLLNRNALFQGGLQPHNYCLPVLKRETHRQAIVSAVTSGSKQYFLGTDSAPHDKRRKECSCGCAGIYSAPVALSLYAKVFEQAGALDKLEAFTSFNGPDFYGLPRNTSKIVLRKSAWKVPDTYSYSSGEIVPMFTGNTLEWLPSDQLEE.

Residues 1-41 (MQTAATSTFFANPHVKHLPGPFLRPSPHYGALVHLPSFRNK) constitute a mitochondrion transit peptide. Zn(2+) is bound by residues histidine 69, histidine 71, lysine 155, histidine 193, histidine 231, and aspartate 305. Position 155 is an N6-carboxylysine (lysine 155).

The protein belongs to the metallo-dependent hydrolases superfamily. DHOase family. Class II DHOase subfamily. The cofactor is Zn(2+).

The protein resides in the mitochondrion. It catalyses the reaction (S)-dihydroorotate + H2O = N-carbamoyl-L-aspartate + H(+). It participates in pyrimidine metabolism; UMP biosynthesis via de novo pathway; (S)-dihydroorotate from bicarbonate: step 3/3. The chain is Dihydroorotase, mitochondrial (PYRC) from Oryza sativa subsp. japonica (Rice).